Here is a 163-residue protein sequence, read N- to C-terminus: Phosphopantetheine adenylyltransferase (163 aa).

Thr-11 contacts substrate. ATP is bound by residues 11-12 and His-19; that span reads TF. The substrate site is built by Lys-43, Leu-75, and Arg-89. Residues 90 to 92, Glu-100, and 125 to 131 contribute to the ATP site; these read GLR and YMFISAT.

Belongs to the bacterial CoaD family. As to quaternary structure, homohexamer. Requires Mg(2+) as cofactor.

It localises to the cytoplasm. The enzyme catalyses (R)-4'-phosphopantetheine + ATP + H(+) = 3'-dephospho-CoA + diphosphate. It participates in cofactor biosynthesis; coenzyme A biosynthesis; CoA from (R)-pantothenate: step 4/5. Functionally, reversibly transfers an adenylyl group from ATP to 4'-phosphopantetheine, yielding dephospho-CoA (dPCoA) and pyrophosphate. This chain is Phosphopantetheine adenylyltransferase, found in Azoarcus sp. (strain BH72).